Here is a 600-residue protein sequence, read N- to C-terminus: Adenine deaminase 4 (600 aa).

Belongs to the metallo-dependent hydrolases superfamily. Adenine deaminase family. The cofactor is Mn(2+).

It catalyses the reaction adenine + H2O + H(+) = hypoxanthine + NH4(+). The polypeptide is Adenine deaminase 4 (Rhizobium meliloti (strain 1021) (Ensifer meliloti)).